Reading from the N-terminus, the 275-residue chain is HUWE1-associated protein modifying stress responses (275 aa).

Residues 32 to 44 (AEQDEQLSPELQE) are compositionally biased toward acidic residues. 4 disordered regions span residues 32 to 51 (AEQD…AAAQ), 155 to 181 (RNSR…SSVE), 204 to 228 (SVRS…RRNG), and 250 to 275 (GTRK…NRML). The residue at position 167 (Ser-167) is a Phosphoserine. Low complexity predominate over residues 172 to 181 (TSTETSSSVE). A compositionally biased stretch (polar residues) spans 204 to 221 (SVRSSTPGSPTHVSSGPN). Position 212 is a phosphoserine (Ser-212).

Belongs to the HAPSTR1 family. Homooligomer. Heterooligomer with HAPSTR2; the interaction is direct and stabilizes HAPSTR1. Interacts with HUWE1. In terms of processing, ubiquitinated by HUWE1. Promotes HAPSTR1 degradation through polyubiquitination.

Its subcellular location is the nucleus. It localises to the cytoplasm. Acts as a central player within a network of stress response pathways promoting cellular adaptability. The E3 ligase HUWE1 assists HAPSTR1 in controlling stress signaling and in turn, HUWE1 feeds back to promote the degradation of HAPSTR1. HAPSTR1 represents a central coordination mechanism for stress response programs. Functions as a negative regulator of TP53/P53 in the cellular response to telomere erosion and probably also DNA damage. May attenuate p53/TP53 activation through the E3 ubiquitin ligase HUWE1. This Mus musculus (Mouse) protein is HUWE1-associated protein modifying stress responses.